Reading from the N-terminus, the 347-residue chain is Molybdenum cofactor biosynthesis bifunctional protein (347 aa).

Residues Met1–Ser158 form a molybdenum cofactor biosynthesis protein C region. Residues Phe75 to His77 and Met116 to Glu117 each bind substrate. The active-site For MoaC activity is the Asp131. The segment at Gln159 to Asn347 is molybdenum cofactor guanylyltransferase. GTP is bound by residues Leu167–Gly169, Lys179, Asp226, and Asp255. Asp255 serves as a coordination point for Mg(2+).

This sequence in the N-terminal section; belongs to the MoaC family. In the C-terminal section; belongs to the MobA family. It depends on Mg(2+) as a cofactor.

The protein resides in the cytoplasm. The enzyme catalyses Mo-molybdopterin + GTP + H(+) = Mo-molybdopterin guanine dinucleotide + diphosphate. It carries out the reaction (8S)-3',8-cyclo-7,8-dihydroguanosine 5'-triphosphate = cyclic pyranopterin phosphate + diphosphate. It functions in the pathway cofactor biosynthesis; molybdopterin biosynthesis. In terms of biological role, catalyzes the conversion of (8S)-3',8-cyclo-7,8-dihydroguanosine 5'-triphosphate to cyclic pyranopterin monophosphate (cPMP). Functionally, transfers a GMP moiety from GTP to Mo-molybdopterin (Mo-MPT) cofactor (Moco or molybdenum cofactor) to form Mo-molybdopterin guanine dinucleotide (Mo-MGD) cofactor. The protein is Molybdenum cofactor biosynthesis bifunctional protein (moaC/mobA) of Synechocystis sp. (strain ATCC 27184 / PCC 6803 / Kazusa).